A 372-amino-acid polypeptide reads, in one-letter code: Queuine tRNA-ribosyltransferase (372 aa).

The active-site Proton acceptor is D89. Residues 89–93, D161, and G232 each bind substrate; that span reads DSGGF. An RNA binding region spans residues 262-268; the sequence is GIGDLPS. D281 acts as the Nucleophile in catalysis. Positions 286–290 are RNA binding; important for wobble base 34 recognition; sequence TKAAR. Residues C319, C321, C324, and H351 each coordinate Zn(2+).

This sequence belongs to the queuine tRNA-ribosyltransferase family. In terms of assembly, homodimer. Within each dimer, one monomer is responsible for RNA recognition and catalysis, while the other monomer binds to the replacement base PreQ1. The cofactor is Zn(2+).

It catalyses the reaction 7-aminomethyl-7-carbaguanine + guanosine(34) in tRNA = 7-aminomethyl-7-carbaguanosine(34) in tRNA + guanine. It participates in tRNA modification; tRNA-queuosine biosynthesis. Its function is as follows. Catalyzes the base-exchange of a guanine (G) residue with the queuine precursor 7-aminomethyl-7-deazaguanine (PreQ1) at position 34 (anticodon wobble position) in tRNAs with GU(N) anticodons (tRNA-Asp, -Asn, -His and -Tyr). Catalysis occurs through a double-displacement mechanism. The nucleophile active site attacks the C1' of nucleotide 34 to detach the guanine base from the RNA, forming a covalent enzyme-RNA intermediate. The proton acceptor active site deprotonates the incoming PreQ1, allowing a nucleophilic attack on the C1' of the ribose to form the product. After dissociation, two additional enzymatic reactions on the tRNA convert PreQ1 to queuine (Q), resulting in the hypermodified nucleoside queuosine (7-(((4,5-cis-dihydroxy-2-cyclopenten-1-yl)amino)methyl)-7-deazaguanosine). This Chlamydia trachomatis serovar A (strain ATCC VR-571B / DSM 19440 / HAR-13) protein is Queuine tRNA-ribosyltransferase.